The chain runs to 390 residues: Transforming growth factor beta-1 proprotein (390 aa).

The N-terminal stretch at 1-29 (MPPSGLRLLPLLLPLPWLLVLTPGRPAAG) is a signal peptide. The segment at 30–74 (LSTCKTIDMELVKRKRIEAIRGQILSKLRLASPPSQGEVPPGPLP) is straightjacket domain. An arm domain region spans residues 75–271 (EAVLALYNST…ATPLERAQHL (197 aa)). Residues Asn82, Asn136, and Asn176 are each glycosylated (N-linked (GlcNAc...) asparagine). The tract at residues 226–252 (DSKDNVLHVEINGISPKRRGDLGTIHD) is bowtie tail. Positions 244 to 246 (RGD) match the Cell attachment site motif. Cystine bridges form between Cys285–Cys294, Cys293–Cys356, Cys322–Cys387, and Cys326–Cys389.

The protein belongs to the TGF-beta family. In terms of assembly, homodimer; disulfide-linked. Interacts with the serine proteases, HTRA1 and HTRA3: the interaction with either inhibits TGFB1-mediated signaling and the HTRA protease activity is required for this inhibition. May interact with THSD4; this interaction may lead to sequestration by FBN1 microfibril assembly and attenuation of TGFB signaling. Interacts with CD109, DPT and ASPN. Interacts with EFEMP2. Interacts with TSKU; the interaction contributes to regulation of the hair cycle. Interacts with TGFBR3. Homodimer; disulfide-linked. Interacts with transforming growth factor beta-1 (TGF-beta-1) chain; interaction is non-covalent and maintains TGF-beta-1 in a latent state; each latency-associated peptide (LAP) monomer interacts with TGF-beta-1 in the other monomer. Interacts with LTBP1; leading to regulation of TGF-beta-1 activation. Interacts with LRRC32/GARP; leading to regulation of TGF-beta-1 activation on the surface of activated regulatory T-cells (Tregs). Interacts with LRRC33/NRROS; leading to regulation of TGF-beta-1 activation in macrophages and microglia. Interacts (via cell attachment site) with integrins ITGAV and ITGB6 (ITGAV:ITGB6), leading to release of the active TGF-beta-1. Interacts with NREP; the interaction results in a decrease in TGFB1 autoinduction. Interacts with HSP90AB1; inhibits latent TGFB1 activation. As to quaternary structure, homodimer; disulfide-linked. Interacts with TGF-beta receptors (TGFBR1 and TGFBR2), leading to signal transduction. In terms of processing, transforming growth factor beta-1 proprotein: The precursor proprotein is cleaved in the Golgi apparatus by FURIN to form Transforming growth factor beta-1 (TGF-beta-1) and Latency-associated peptide (LAP) chains, which remain non-covalently linked, rendering TGF-beta-1 inactive. N-glycosylated. Deglycosylation leads to activation of Transforming growth factor beta-1 (TGF-beta-1); mechanisms triggering deglycosylation-driven activation of TGF-beta-1 are however unclear. As to expression, abundant in the bone matrix. Expressed in cardiomyocytes.

Its subcellular location is the secreted. It localises to the extracellular space. The protein localises to the extracellular matrix. In terms of biological role, transforming growth factor beta-1 proprotein: Precursor of the Latency-associated peptide (LAP) and Transforming growth factor beta-1 (TGF-beta-1) chains, which constitute the regulatory and active subunit of TGF-beta-1, respectively. Functionally, required to maintain the Transforming growth factor beta-1 (TGF-beta-1) chain in a latent state during storage in extracellular matrix. Associates non-covalently with TGF-beta-1 and regulates its activation via interaction with 'milieu molecules', such as LTBP1, LRRC32/GARP and LRRC33/NRROS, that control activation of TGF-beta-1. Interaction with LRRC33/NRROS regulates activation of TGF-beta-1 in macrophages and microglia. Interaction with LRRC32/GARP controls activation of TGF-beta-1 on the surface of activated regulatory T-cells (Tregs). Interaction with integrins (ITGAV:ITGB6 or ITGAV:ITGB8) results in distortion of the Latency-associated peptide chain and subsequent release of the active TGF-beta-1. Its function is as follows. Multifunctional protein that regulates the growth and differentiation of various cell types and is involved in various processes, such as normal development, immune function, microglia function and responses to neurodegeneration. Activation into mature form follows different steps: following cleavage of the proprotein in the Golgi apparatus, Latency-associated peptide (LAP) and Transforming growth factor beta-1 (TGF-beta-1) chains remain non-covalently linked rendering TGF-beta-1 inactive during storage in extracellular matrix. At the same time, LAP chain interacts with 'milieu molecules', such as LTBP1, LRRC32/GARP and LRRC33/NRROS that control activation of TGF-beta-1 and maintain it in a latent state during storage in extracellular milieus. TGF-beta-1 is released from LAP by integrins (ITGAV:ITGB6 or ITGAV:ITGB8): integrin-binding to LAP stabilizes an alternative conformation of the LAP bowtie tail and results in distortion of the LAP chain and subsequent release of the active TGF-beta-1. Once activated following release of LAP, TGF-beta-1 acts by binding to TGF-beta receptors (TGFBR1 and TGFBR2), which transduce signal. While expressed by many cells types, TGF-beta-1 only has a very localized range of action within cell environment thanks to fine regulation of its activation by Latency-associated peptide chain (LAP) and 'milieu molecules'. Plays an important role in bone remodeling: acts as a potent stimulator of osteoblastic bone formation, causing chemotaxis, proliferation and differentiation in committed osteoblasts. Can promote either T-helper 17 cells (Th17) or regulatory T-cells (Treg) lineage differentiation in a concentration-dependent manner. At high concentrations, leads to FOXP3-mediated suppression of RORC and down-regulation of IL-17 expression, favoring Treg cell development. At low concentrations in concert with IL-6 and IL-21, leads to expression of the IL-17 and IL-23 receptors, favoring differentiation to Th17 cells. Stimulates sustained production of collagen through the activation of CREB3L1 by regulated intramembrane proteolysis (RIP). Mediates SMAD2/3 activation by inducing its phosphorylation and subsequent translocation to the nucleus. Positively regulates odontoblastic differentiation in dental papilla cells, via promotion of IPO7-mediated translocation of phosphorylated SMAD2 to the nucleus and subsequent transcription of target genes. Can induce epithelial-to-mesenchymal transition (EMT) and cell migration in various cell types. The chain is Transforming growth factor beta-1 proprotein (Tgfb1) from Rattus norvegicus (Rat).